The following is a 119-amino-acid chain: Large ribosomal subunit protein uL22 (119 aa).

This sequence belongs to the universal ribosomal protein uL22 family. Part of the 50S ribosomal subunit.

In terms of biological role, this protein binds specifically to 23S rRNA; its binding is stimulated by other ribosomal proteins, e.g. L4, L17, and L20. It is important during the early stages of 50S assembly. It makes multiple contacts with different domains of the 23S rRNA in the assembled 50S subunit and ribosome. The globular domain of the protein is located near the polypeptide exit tunnel on the outside of the subunit, while an extended beta-hairpin is found that lines the wall of the exit tunnel in the center of the 70S ribosome. This chain is Large ribosomal subunit protein uL22, found in Rickettsia rickettsii (strain Iowa).